The primary structure comprises 374 residues: Lipoyl synthase, mitochondrial (374 aa).

[4Fe-4S] cluster-binding residues include Cys-101, Cys-106, Cys-112, Cys-132, Cys-136, Cys-139, and Ser-347. The Radical SAM core domain occupies 117–336 (ENGTQTATIM…EERGNDLGFL (220 aa)).

It belongs to the radical SAM superfamily. Lipoyl synthase family. [4Fe-4S] cluster is required as a cofactor.

Its subcellular location is the mitochondrion. It carries out the reaction [[Fe-S] cluster scaffold protein carrying a second [4Fe-4S](2+) cluster] + N(6)-octanoyl-L-lysyl-[protein] + 2 oxidized [2Fe-2S]-[ferredoxin] + 2 S-adenosyl-L-methionine + 4 H(+) = [[Fe-S] cluster scaffold protein] + N(6)-[(R)-dihydrolipoyl]-L-lysyl-[protein] + 4 Fe(3+) + 2 hydrogen sulfide + 2 5'-deoxyadenosine + 2 L-methionine + 2 reduced [2Fe-2S]-[ferredoxin]. It functions in the pathway protein modification; protein lipoylation via endogenous pathway; protein N(6)-(lipoyl)lysine from octanoyl-[acyl-carrier-protein]: step 2/2. Functionally, catalyzes the radical-mediated insertion of two sulfur atoms into the C-6 and C-8 positions of the octanoyl moiety bound to the lipoyl domains of lipoate-dependent enzymes, thereby converting the octanoylated domains into lipoylated derivatives. This is Lipoyl synthase, mitochondrial from Drosophila pseudoobscura pseudoobscura (Fruit fly).